Reading from the N-terminus, the 360-residue chain is Acetylxylan esterase / glucomannan deacetylase (360 aa).

A signal peptide spans 1–21 (MKPHALIGLLAGMLLSSSLYA). The active-site Nucleophile is the serine 151.

This sequence belongs to the carbohydrate esterase 2 (CE2) family.

The protein resides in the secreted. The catalysed reaction is Deacetylation of xylans and xylo-oligosaccharides.. Its pathway is glycan degradation; xylan degradation. Involved in the degradation of plant cell wall polysaccharides. Catalyzes the deacetylation of acetylated birchwood xylan and glucomannan, with a large preference for the latter, and of the synthetic substrate 4-nitrophenyl acetate (4-NPAc). The protein is Acetylxylan esterase / glucomannan deacetylase of Cellvibrio japonicus (strain Ueda107) (Pseudomonas fluorescens subsp. cellulosa).